The sequence spans 259 residues: Undecaprenyl-diphosphatase (259 aa).

The next 7 membrane-spanning stretches (helical) occupy residues 1–21 (MEIF…FLPI), 40–60 (QITL…IIFW), 75–95 (WLTI…ILFE), 101–121 (LFSS…LLYL), 179–199 (SFLL…KDAL), 206–226 (LTWL…YFAI), and 239–259 (TVFA…AGIF).

It belongs to the UppP family.

It localises to the cell inner membrane. The catalysed reaction is di-trans,octa-cis-undecaprenyl diphosphate + H2O = di-trans,octa-cis-undecaprenyl phosphate + phosphate + H(+). Catalyzes the dephosphorylation of undecaprenyl diphosphate (UPP). Confers resistance to bacitracin. This is Undecaprenyl-diphosphatase from Halothermothrix orenii (strain H 168 / OCM 544 / DSM 9562).